A 329-amino-acid chain; its full sequence is Probable ABC transporter permease protein MG188 homolog (329 aa).

A run of 6 helical transmembrane segments spans residues 30–50 (FLLFCPALLTTFLFTLVPFFL), 96–116 (IISLPLTIVLAIIISSAIVFV), 128–148 (VFFLPYVTSGVAVSIAFIYIL), 176–196 (ALWGILIFGIWKNMAFNVLVI), 234–254 (LIFLLTLLILGGMQVFPISLF), and 283–303 (NFAGAATLVLFILGVCYGLVL). In terms of domain architecture, ABC transmembrane type-1 spans 88–303 (LRNSFLYSII…ILGVCYGLVL (216 aa)).

This sequence belongs to the binding-protein-dependent transport system permease family. MalFG subfamily.

Its subcellular location is the cell membrane. Functionally, probably part of a binding-protein-dependent transport system. Probably responsible for the translocation of the substrate across the membrane. This chain is Probable ABC transporter permease protein MG188 homolog, found in Mycoplasma pneumoniae (strain ATCC 29342 / M129 / Subtype 1) (Mycoplasmoides pneumoniae).